The primary structure comprises 176 residues: Prepronociceptin (176 aa).

Positions 1–19 are cleaved as a signal peptide; it reads MKILFCDLLLLSLFSSVSS. Propeptides lie at residues 20 to 95 and 169 to 176; these read SCQK…MQHL and TLHQNGNA.

It belongs to the opioid neuropeptide precursor family. In terms of processing, specific enzymatic cleavages at paired basic residues probably yield other active peptides besides nociceptin. Post-translationally, the N-terminal domain contains 6 conserved cysteines thought to be involved in disulfide bonding and/or processing.

Its subcellular location is the secreted. In terms of biological role, ligand of the opioid receptor-like receptor OPRL1. It may act as a transmitter in the brain by modulating nociceptive and locomotor behavior. May be involved in neuronal differentiation and development. Blocks nociceptin action in pain transmission by inhibiting nociceptin-induced hyperalgesia and allodynia. Its function is as follows. Has potent analgesic activity. This Bos taurus (Bovine) protein is Prepronociceptin (PNOC).